The sequence spans 126 residues: MSVMDLAGTCSSFQSDLDFCSDCGSVLPLPGAQDTVTCTRCGFNINVRDFEGKVVKTSVVFHQLGTAMPMSVEEGPECQGPVVDRRCPRCGHEGMAYHTRQMRSADEGQTVFYTCTNCKFQEKEDS.

6 residues coordinate Zn(2+): cysteine 20, cysteine 23, cysteine 38, cysteine 41, cysteine 87, and cysteine 90. The segment at 20–41 (CSDCGSVLPLPGAQDTVTCTRC) adopts a C4-type zinc-finger fold. The TFIIS-type zinc-finger motif lies at 83-123 (VDRRCPRCGHEGMAYHTRQMRSADEGQTVFYTCTNCKFQEK). Residues 106 to 107 (DE) carry the Hairpin motif. Zn(2+)-binding residues include cysteine 115 and cysteine 118.

This sequence belongs to the archaeal RpoM/eukaryotic RPA12/RPB9/RPC11 RNA polymerase family. As to quaternary structure, component of the RNA polymerase I (Pol I) complex consisting of 13 subunits: a ten-subunit catalytic core composed of POLR1A/RPA1, POLR1B/RPA2, POLR1C/RPAC1, POLR1D/RPAC2, POLR1H/RPA12, POLR2E/RPABC1, POLR2F/RPABC2, POLR2H/RPABC3, POLR2K/RPABC4 and POLR2L/RPABC5; a mobile stalk subunit POLR1F/RPA43 protruding from the core and additional subunits homologous to general transcription factors POLR1E/RPA49 and POLR1G/RPA34. Part of Pol I pre-initiation complex (PIC), in which Pol I core assembles with RRN3 and promoter-bound UTBF and SL1/TIF-IB complex.

It is found in the nucleus. The protein localises to the nucleolus. Its function is as follows. Core component of RNA polymerase I (Pol I), a DNA-dependent RNA polymerase which synthesizes ribosomal RNA precursors using the four ribonucleoside triphosphates as substrates. Can mediate Pol I proofreading of the nascent RNA transcript. Anchors into the Pol I active site to monitor transcription fidelity and cleave mis-incorporated 5'-ribonucleotides. The protein is DNA-directed RNA polymerase I subunit RPA12 of Macaca mulatta (Rhesus macaque).